The primary structure comprises 426 residues: Serine--tRNA ligase (426 aa).

L-serine is bound at residue 233–235 (TAE). Position 264 to 266 (264 to 266 (RSE)) interacts with ATP. E287 contributes to the L-serine binding site. 351-354 (EISS) provides a ligand contact to ATP. S387 serves as a coordination point for L-serine.

This sequence belongs to the class-II aminoacyl-tRNA synthetase family. Type-1 seryl-tRNA synthetase subfamily. As to quaternary structure, homodimer. The tRNA molecule binds across the dimer.

It localises to the cytoplasm. It carries out the reaction tRNA(Ser) + L-serine + ATP = L-seryl-tRNA(Ser) + AMP + diphosphate + H(+). It catalyses the reaction tRNA(Sec) + L-serine + ATP = L-seryl-tRNA(Sec) + AMP + diphosphate + H(+). It participates in aminoacyl-tRNA biosynthesis; selenocysteinyl-tRNA(Sec) biosynthesis; L-seryl-tRNA(Sec) from L-serine and tRNA(Sec): step 1/1. In terms of biological role, catalyzes the attachment of serine to tRNA(Ser). Is also able to aminoacylate tRNA(Sec) with serine, to form the misacylated tRNA L-seryl-tRNA(Sec), which will be further converted into selenocysteinyl-tRNA(Sec). This Clostridium tetani (strain Massachusetts / E88) protein is Serine--tRNA ligase.